Here is a 372-residue protein sequence, read N- to C-terminus: 4-hydroxy-3-methylbut-2-en-1-yl diphosphate synthase (flavodoxin) (372 aa).

Residues C270, C273, C305, and E312 each coordinate [4Fe-4S] cluster.

Belongs to the IspG family. [4Fe-4S] cluster serves as cofactor.

The enzyme catalyses (2E)-4-hydroxy-3-methylbut-2-enyl diphosphate + oxidized [flavodoxin] + H2O + 2 H(+) = 2-C-methyl-D-erythritol 2,4-cyclic diphosphate + reduced [flavodoxin]. Its pathway is isoprenoid biosynthesis; isopentenyl diphosphate biosynthesis via DXP pathway; isopentenyl diphosphate from 1-deoxy-D-xylulose 5-phosphate: step 5/6. Its function is as follows. Converts 2C-methyl-D-erythritol 2,4-cyclodiphosphate (ME-2,4cPP) into 1-hydroxy-2-methyl-2-(E)-butenyl 4-diphosphate. The chain is 4-hydroxy-3-methylbut-2-en-1-yl diphosphate synthase (flavodoxin) from Aliivibrio fischeri (strain ATCC 700601 / ES114) (Vibrio fischeri).